The chain runs to 215 residues: 3-isopropylmalate dehydratase small subunit (215 aa).

The protein belongs to the LeuD family. LeuD type 1 subfamily. As to quaternary structure, heterodimer of LeuC and LeuD.

The catalysed reaction is (2R,3S)-3-isopropylmalate = (2S)-2-isopropylmalate. It participates in amino-acid biosynthesis; L-leucine biosynthesis; L-leucine from 3-methyl-2-oxobutanoate: step 2/4. Its function is as follows. Catalyzes the isomerization between 2-isopropylmalate and 3-isopropylmalate, via the formation of 2-isopropylmaleate. This Polynucleobacter asymbioticus (strain DSM 18221 / CIP 109841 / QLW-P1DMWA-1) (Polynucleobacter necessarius subsp. asymbioticus) protein is 3-isopropylmalate dehydratase small subunit.